Reading from the N-terminus, the 155-residue chain is Small ribosomal subunit protein uS7 (155 aa).

Belongs to the universal ribosomal protein uS7 family. Part of the 30S ribosomal subunit. Contacts proteins S9 and S11.

One of the primary rRNA binding proteins, it binds directly to 16S rRNA where it nucleates assembly of the head domain of the 30S subunit. Is located at the subunit interface close to the decoding center, probably blocks exit of the E-site tRNA. This is Small ribosomal subunit protein uS7 from Fervidobacterium nodosum (strain ATCC 35602 / DSM 5306 / Rt17-B1).